We begin with the raw amino-acid sequence, 307 residues long: Elongation factor Ts (307 aa).

Residues 79 to 82 (TDFV) are involved in Mg(2+) ion dislocation from EF-Tu.

Belongs to the EF-Ts family.

The protein localises to the cytoplasm. Associates with the EF-Tu.GDP complex and induces the exchange of GDP to GTP. It remains bound to the aminoacyl-tRNA.EF-Tu.GTP complex up to the GTP hydrolysis stage on the ribosome. In Bartonella quintana (strain Toulouse) (Rochalimaea quintana), this protein is Elongation factor Ts (tsf).